Consider the following 50-residue polypeptide: Defensin D1 (50 aa).

Cystine bridges form between cysteine 3–cysteine 50, cysteine 14–cysteine 35, cysteine 20–cysteine 44, and cysteine 24–cysteine 46.

In terms of processing, contains 4 disulfide bonds.

The protein localises to the secreted. Antimicrobial peptide active against fungi, Gram-positive and Gram-negative bacteria. Inhibits growth of hyphae in the fungi A.niger (IC(50)=3.5 ug/ml), B.sorokiniana (IC(50)=3.0 ug/ml), F.oxysporum (IC(50)=9.5 ug/ml), F.graminearum (IC(50)=6.9 ug/ml), F.culmorum (IC(50)=6.9 ug/ml) and B.cinerea (IC(50)=27.4 ug/ml). Has no effect on spore germination. Destroys spores in germinated conidia by disruption of cell walls and membranes in A.niger and B.sorokiniana. Causes vacuolization of germinated macro- and microconidia in F.oxysporum, F.graminearum and F.culmorum. Strongly inhibits growth of P.infestans on potato tubers above concentrations of 13.6 ug/ml. Inhibits growth of Gram-positive bacteria C.michiganensis and B.subtilis and of Gram-negative bacteria P.syringae, E.carotovora and E.coli. This chain is Defensin D1, found in Nigella sativa (Black cumin).